A 1676-amino-acid chain; its full sequence is Protein TIC 214 (1676 aa).

A run of 6 helical transmembrane segments spans residues 23-43 (AGPLIILGIYYGFLITLPIAP), 71-91 (GILIAAISGLTVSQLAFFLSI), 96-116 (LYMIWLKPHLLTLLVLPYMFF), 145-165 (AFLDSFLFQALNPVLLPSPVM), 179-199 (VSLFILGTAIGWLGGQIMFVL), and 226-246 (IFPPIVFGLCLAYMGRAPVSF).

It belongs to the TIC214 family. Part of the Tic complex.

It localises to the plastid. The protein resides in the chloroplast inner membrane. Involved in protein precursor import into chloroplasts. May be part of an intermediate translocation complex acting as a protein-conducting channel at the inner envelope. This Zygnema circumcarinatum (Green alga) protein is Protein TIC 214.